We begin with the raw amino-acid sequence, 340 residues long: 4-hydroxy-3-methylbut-2-enyl diphosphate reductase (340 aa).

Residue Cys18 participates in [4Fe-4S] cluster binding. (2E)-4-hydroxy-3-methylbut-2-enyl diphosphate contacts are provided by His47 and His83. 2 residues coordinate dimethylallyl diphosphate: His47 and His83. Positions 47 and 83 each coordinate isopentenyl diphosphate. Position 105 (Cys105) interacts with [4Fe-4S] cluster. Residue His133 coordinates (2E)-4-hydroxy-3-methylbut-2-enyl diphosphate. His133 is a dimethylallyl diphosphate binding site. His133 serves as a coordination point for isopentenyl diphosphate. Residue Glu135 is the Proton donor of the active site. A (2E)-4-hydroxy-3-methylbut-2-enyl diphosphate-binding site is contributed by Thr174. A [4Fe-4S] cluster-binding site is contributed by Cys204. 4 residues coordinate (2E)-4-hydroxy-3-methylbut-2-enyl diphosphate: Ser232, Ser233, Asn234, and Ser277. Ser232, Ser233, Asn234, and Ser277 together coordinate dimethylallyl diphosphate. Isopentenyl diphosphate is bound by residues Ser232, Ser233, Asn234, and Ser277.

This sequence belongs to the IspH family. It depends on [4Fe-4S] cluster as a cofactor.

It catalyses the reaction isopentenyl diphosphate + 2 oxidized [2Fe-2S]-[ferredoxin] + H2O = (2E)-4-hydroxy-3-methylbut-2-enyl diphosphate + 2 reduced [2Fe-2S]-[ferredoxin] + 2 H(+). The enzyme catalyses dimethylallyl diphosphate + 2 oxidized [2Fe-2S]-[ferredoxin] + H2O = (2E)-4-hydroxy-3-methylbut-2-enyl diphosphate + 2 reduced [2Fe-2S]-[ferredoxin] + 2 H(+). It participates in isoprenoid biosynthesis; dimethylallyl diphosphate biosynthesis; dimethylallyl diphosphate from (2E)-4-hydroxy-3-methylbutenyl diphosphate: step 1/1. The protein operates within isoprenoid biosynthesis; isopentenyl diphosphate biosynthesis via DXP pathway; isopentenyl diphosphate from 1-deoxy-D-xylulose 5-phosphate: step 6/6. Functionally, catalyzes the conversion of 1-hydroxy-2-methyl-2-(E)-butenyl 4-diphosphate (HMBPP) into a mixture of isopentenyl diphosphate (IPP) and dimethylallyl diphosphate (DMAPP). Acts in the terminal step of the DOXP/MEP pathway for isoprenoid precursor biosynthesis. This Bartonella quintana (strain Toulouse) (Rochalimaea quintana) protein is 4-hydroxy-3-methylbut-2-enyl diphosphate reductase.